The sequence spans 234 residues: UDP-2,3-diacylglucosamine hydrolase (234 aa).

Positions 9, 11, 42, 80, and 115 each coordinate Mn(2+). Position 80–81 (80–81 (NR)) interacts with substrate. The substrate site is built by aspartate 123, serine 161, lysine 165, lysine 168, and histidine 196. Residues histidine 196 and histidine 198 each contribute to the Mn(2+) site.

It belongs to the LpxH family. Mn(2+) is required as a cofactor.

Its subcellular location is the cell inner membrane. The catalysed reaction is UDP-2-N,3-O-bis[(3R)-3-hydroxytetradecanoyl]-alpha-D-glucosamine + H2O = 2-N,3-O-bis[(3R)-3-hydroxytetradecanoyl]-alpha-D-glucosaminyl 1-phosphate + UMP + 2 H(+). The protein operates within glycolipid biosynthesis; lipid IV(A) biosynthesis; lipid IV(A) from (3R)-3-hydroxytetradecanoyl-[acyl-carrier-protein] and UDP-N-acetyl-alpha-D-glucosamine: step 4/6. Functionally, hydrolyzes the pyrophosphate bond of UDP-2,3-diacylglucosamine to yield 2,3-diacylglucosamine 1-phosphate (lipid X) and UMP by catalyzing the attack of water at the alpha-P atom. Involved in the biosynthesis of lipid A, a phosphorylated glycolipid that anchors the lipopolysaccharide to the outer membrane of the cell. The chain is UDP-2,3-diacylglucosamine hydrolase from Histophilus somni (strain 2336) (Haemophilus somnus).